A 418-amino-acid chain; its full sequence is ADP-ribose glycohydrolase MACROD2 (418 aa).

Residues 57–238 (PEEIQVKNSL…IYKRKLNEFF (182 aa)) form the Macro domain. Substrate contacts are provided by residues 75-77 (GDI), 88-90 (AAN), 95-100 (GGGGVD), 183-189 (ISTGIYG), and F222. Positions 238 to 418 (FPKDGGDDEE…KDTNDDANEA (181 aa)) are disordered. A compositionally biased stretch (basic and acidic residues) spans 250-262 (KGDSDEMKEDTEG). The span at 295 to 318 (TGNTQDMTAMSLETNEGNDVSSPA) shows a compositional bias: polar residues. Basic and acidic residues predominate over residues 321–360 (PLKEGEELSEAKITGEKISVEPKTPEPEDAKMTVEEKSQE). Residues 377-389 (ETEDLDGDSEEPS) show a composition bias toward acidic residues.

It belongs to the MacroD-type family. MacroD1/2-like subfamily.

It localises to the nucleus. It carries out the reaction 2''-O-acetyl-ADP-D-ribose + H2O = ADP-D-ribose + acetate + H(+). It catalyses the reaction 4-O-(ADP-D-ribosyl)-L-aspartyl-[protein] + H2O = L-aspartyl-[protein] + ADP-D-ribose + H(+). The catalysed reaction is 5-O-(ADP-D-ribosyl)-L-glutamyl-[protein] + H2O = L-glutamyl-[protein] + ADP-D-ribose + H(+). The enzyme catalyses alpha-NAD(+) + H2O = ADP-D-ribose + nicotinamide + H(+). Subject to product inhibition by ADP-ribose. Removes ADP-ribose from aspartate and glutamate residues in proteins bearing a single ADP-ribose moiety. Inactive towards proteins bearing poly-ADP-ribose. Deacetylates O-acetyl-ADP ribose, a signaling molecule generated by the deacetylation of acetylated lysine residues in histones and other proteins. This Xenopus laevis (African clawed frog) protein is ADP-ribose glycohydrolase MACROD2.